A 224-amino-acid polypeptide reads, in one-letter code: Thymidylate kinase (224 aa).

13–20 (GGEGAGKS) serves as a coordination point for ATP.

The protein belongs to the thymidylate kinase family.

The catalysed reaction is dTMP + ATP = dTDP + ADP. Phosphorylation of dTMP to form dTDP in both de novo and salvage pathways of dTTP synthesis. In Agrobacterium fabrum (strain C58 / ATCC 33970) (Agrobacterium tumefaciens (strain C58)), this protein is Thymidylate kinase.